We begin with the raw amino-acid sequence, 255 residues long: Taurine import ATP-binding protein TauB (255 aa).

The ABC transporter domain occupies L2 to S229. Residue G34–T41 participates in ATP binding.

It belongs to the ABC transporter superfamily. Taurine importer (TC 3.A.1.17.1) family. As to quaternary structure, the complex is composed of two ATP-binding proteins (TauB), two transmembrane proteins (TauC) and a solute-binding protein (TauA).

The protein resides in the cell inner membrane. It catalyses the reaction taurine(out) + ATP + H2O = taurine(in) + ADP + phosphate + H(+). Its function is as follows. Part of the ABC transporter complex TauABC involved in taurine import. Responsible for energy coupling to the transport system. The protein is Taurine import ATP-binding protein TauB of Escherichia coli O6:H1 (strain CFT073 / ATCC 700928 / UPEC).